A 378-amino-acid chain; its full sequence is Queuine tRNA-ribosyltransferase (378 aa).

Asp-91 acts as the Proton acceptor in catalysis. Substrate is bound by residues 91–95, Asp-145, Gln-189, and Gly-216; that span reads DSGGF. The RNA binding stretch occupies residues 247 to 253; it reads GVGKPED. The active-site Nucleophile is Asp-266. Residues 271 to 275 form an RNA binding; important for wobble base 34 recognition region; that stretch reads TRNAR. Zn(2+) contacts are provided by Cys-304, Cys-306, Cys-309, and His-335.

Belongs to the queuine tRNA-ribosyltransferase family. Homodimer. Within each dimer, one monomer is responsible for RNA recognition and catalysis, while the other monomer binds to the replacement base PreQ1. The cofactor is Zn(2+).

The enzyme catalyses 7-aminomethyl-7-carbaguanine + guanosine(34) in tRNA = 7-aminomethyl-7-carbaguanosine(34) in tRNA + guanine. It participates in tRNA modification; tRNA-queuosine biosynthesis. Its function is as follows. Catalyzes the base-exchange of a guanine (G) residue with the queuine precursor 7-aminomethyl-7-deazaguanine (PreQ1) at position 34 (anticodon wobble position) in tRNAs with GU(N) anticodons (tRNA-Asp, -Asn, -His and -Tyr). Catalysis occurs through a double-displacement mechanism. The nucleophile active site attacks the C1' of nucleotide 34 to detach the guanine base from the RNA, forming a covalent enzyme-RNA intermediate. The proton acceptor active site deprotonates the incoming PreQ1, allowing a nucleophilic attack on the C1' of the ribose to form the product. After dissociation, two additional enzymatic reactions on the tRNA convert PreQ1 to queuine (Q), resulting in the hypermodified nucleoside queuosine (7-(((4,5-cis-dihydroxy-2-cyclopenten-1-yl)amino)methyl)-7-deazaguanosine). This is Queuine tRNA-ribosyltransferase from Vibrio atlanticus (strain LGP32) (Vibrio splendidus (strain Mel32)).